The primary structure comprises 571 residues: Urease subunit alpha (571 aa).

Positions 129-571 (GGIDTHIHFI…LPMAQRYFLF (443 aa)) constitute a Urease domain. Residues His134, His136, and Lys217 each contribute to the Ni(2+) site. An N6-carboxylysine modification is found at Lys217. Residue His219 coordinates substrate. Residues His246 and His272 each coordinate Ni(2+). Residue His320 is the Proton donor of the active site. A Ni(2+)-binding site is contributed by Asp360.

It belongs to the metallo-dependent hydrolases superfamily. Urease alpha subunit family. In terms of assembly, heterotrimer of UreA (gamma), UreB (beta) and UreC (alpha) subunits. Three heterotrimers associate to form the active enzyme. Requires Ni cation as cofactor. Carboxylation allows a single lysine to coordinate two nickel ions.

The protein resides in the cytoplasm. The catalysed reaction is urea + 2 H2O + H(+) = hydrogencarbonate + 2 NH4(+). Its pathway is nitrogen metabolism; urea degradation; CO(2) and NH(3) from urea (urease route): step 1/1. In Cupriavidus pinatubonensis (strain JMP 134 / LMG 1197) (Cupriavidus necator (strain JMP 134)), this protein is Urease subunit alpha.